Consider the following 475-residue polypeptide: Adenosylhomocysteinase (475 aa).

3 residues coordinate substrate: T61, D140, and E200. 201–203 lines the NAD(+) pocket; it reads TTT. 2 residues coordinate substrate: K230 and D234. Residues N235, 264-269, E287, N322, 343-345, and N388 contribute to the NAD(+) site; these read GYGDVG and IGH.

The protein belongs to the adenosylhomocysteinase family. NAD(+) serves as cofactor.

Its subcellular location is the cytoplasm. It carries out the reaction S-adenosyl-L-homocysteine + H2O = L-homocysteine + adenosine. The protein operates within amino-acid biosynthesis; L-homocysteine biosynthesis; L-homocysteine from S-adenosyl-L-homocysteine: step 1/1. In terms of biological role, may play a key role in the regulation of the intracellular concentration of adenosylhomocysteine. The sequence is that of Adenosylhomocysteinase from Paracidovorax citrulli (strain AAC00-1) (Acidovorax citrulli).